Consider the following 695-residue polypeptide: Rho-related BTB domain-containing protein 1 (695 aa).

A rho-like region spans residues 1 to 210 (MDSDMDYERP…DNAIRAALIS (210 aa)). GTP is bound by residues 21–28 (GDNAVGKT), 84–88 (DTFGD), and 140–143 (CQLD). BTB domains are found at residues 266–426 (ADVL…DEKE) and 484–551 (SDVT…SPNL). Residues 325-351 (SLGSAEEGKEGPQRTPQADPGASSGQD) are disordered.

This sequence belongs to the small GTPase superfamily. Rho family. As to expression, highest expression in heart and testis.

The chain is Rho-related BTB domain-containing protein 1 (Rhobtb1) from Mus musculus (Mouse).